A 170-amino-acid chain; its full sequence is Peptide deformylase 2 (170 aa).

C94 and H136 together coordinate Fe cation. The active site involves E137. H140 contributes to the Fe cation binding site.

It belongs to the polypeptide deformylase family. Requires Fe(2+) as cofactor.

The enzyme catalyses N-terminal N-formyl-L-methionyl-[peptide] + H2O = N-terminal L-methionyl-[peptide] + formate. Its function is as follows. Removes the formyl group from the N-terminal Met of newly synthesized proteins. Requires at least a dipeptide for an efficient rate of reaction. N-terminal L-methionine is a prerequisite for activity but the enzyme has broad specificity at other positions. The protein is Peptide deformylase 2 of Xanthomonas campestris pv. campestris (strain ATCC 33913 / DSM 3586 / NCPPB 528 / LMG 568 / P 25).